Here is a 300-residue protein sequence, read N- to C-terminus: PAK4-inhibitor INKA2 (300 aa).

Disordered regions lie at residues 59 to 104, 178 to 201, and 230 to 288; these read GGTP…SSPK, LEKG…GQSR, and KEKP…LEPS. Positions 60-73 are enriched in polar residues; it reads GTPTFSCPESSQEQ. The segment covering 93-102 has biased composition (low complexity); it reads SSSQPSFDSS. Residues 140-183 are inka box; it reads EPDDWTSTLMSRGRNRQPLVLGDNVFADLVGNWLDLPELEKGGE. Residues 246–256 show a composition bias toward basic residues; the sequence is GRSKKVKKRSL.

The protein belongs to the INKA family. In terms of assembly, interacts with PAK4. In terms of tissue distribution, enriched in the nervous system.

The protein resides in the nucleus. In terms of biological role, inhibitor of the serine/threonine-protein kinase PAK4. Acts by binding PAK4 in a substrate-like manner, inhibiting the protein kinase activity. This chain is PAK4-inhibitor INKA2, found in Mus musculus (Mouse).